Consider the following 2498-residue polypeptide: PKS-NRPS hybrid synthetase acdB (2498 aa).

An adenylation (A) domain region spans residues phenylalanine 34–arginine 427. The Carrier 1 domain occupies glutamine 531 to aspartate 606. O-(pantetheine 4'-phosphoryl)serine is present on serine 566. A Ketosynthase family 3 (KS3) domain is found at serine 627–glutamate 1058. Catalysis depends on for beta-ketoacyl synthase activity residues cysteine 802, histidine 938, and histidine 979. A malonyl-CoA:ACP transacylase (MAT) domain region spans residues leucine 1165–histidine 1485. The ketoreductase (KR) domain stretch occupies residues glycine 1739–leucine 1917. The Carrier 2 domain maps to glutamate 2017–leucine 2092. At serine 2052 the chain carries O-(pantetheine 4'-phosphoryl)serine. Residues valine 2149 to isoleucine 2378 are thioester reductase (TE) domain.

This sequence in the C-terminal section; belongs to the NRP synthetase family. It depends on pantetheine 4'-phosphate as a cofactor.

Its pathway is secondary metabolite biosynthesis. In terms of biological role, PKS-NRPS hybrid synthetase; part of the gene cluster that mediates the biosynthesis of aspcandine, a pyrrolobenzazepine alkaloid. Initially, the indoleamine 2,3-dioxygenase acdA accepts L-tryptophan and performs the oxidative opening of the indole ring to yield N'-formyl-L-kynurenine, which undergoes the spontaneous deformylation reaction to provide L-kynurenine. The kynurenine 3-monooxygenase acdD then hydroxylates L-kynurenine to afford 3-hydroxy-L-kynurenine. 3-hydroxy-L-kynurenine is activated by the A domain of the NRPS-PKS acdB and subsequently loaded onto the enzyme. The KS domain conducts the decarboxylative condensation of the 3-hydroxy-L-kynurenyl and malonyl moieties, and subsequent nucleophilic attacks by the two amino groups would occur nonenzymatically at two distinct positions, achieving the chain release and the construction of the tricyclic system. Finally, a dehydration reaction completes the biosynthesis to yield aspcandine. The polypeptide is PKS-NRPS hybrid synthetase acdB (Aspergillus candidus).